The chain runs to 196 residues: Probable malonic semialdehyde reductase RutE (196 aa).

It belongs to the nitroreductase family. HadB/RutE subfamily. FMN is required as a cofactor.

The catalysed reaction is 3-hydroxypropanoate + NADP(+) = 3-oxopropanoate + NADPH + H(+). May reduce toxic product malonic semialdehyde to 3-hydroxypropionic acid, which is excreted. The sequence is that of Probable malonic semialdehyde reductase RutE from Shigella sonnei (strain Ss046).